The sequence spans 472 residues: Aspartyl/glutamyl-tRNA(Asn/Gln) amidotransferase subunit B (472 aa).

This sequence belongs to the GatB/GatE family. GatB subfamily. As to quaternary structure, heterotrimer of A, B and C subunits.

The enzyme catalyses L-glutamyl-tRNA(Gln) + L-glutamine + ATP + H2O = L-glutaminyl-tRNA(Gln) + L-glutamate + ADP + phosphate + H(+). It carries out the reaction L-aspartyl-tRNA(Asn) + L-glutamine + ATP + H2O = L-asparaginyl-tRNA(Asn) + L-glutamate + ADP + phosphate + 2 H(+). Its function is as follows. Allows the formation of correctly charged Asn-tRNA(Asn) or Gln-tRNA(Gln) through the transamidation of misacylated Asp-tRNA(Asn) or Glu-tRNA(Gln) in organisms which lack either or both of asparaginyl-tRNA or glutaminyl-tRNA synthetases. The reaction takes place in the presence of glutamine and ATP through an activated phospho-Asp-tRNA(Asn) or phospho-Glu-tRNA(Gln). The protein is Aspartyl/glutamyl-tRNA(Asn/Gln) amidotransferase subunit B of Mycoplasmopsis agalactiae (strain NCTC 10123 / CIP 59.7 / PG2) (Mycoplasma agalactiae).